Reading from the N-terminus, the 118-residue chain is Large ribosomal subunit protein bL20 (118 aa).

Belongs to the bacterial ribosomal protein bL20 family.

In terms of biological role, binds directly to 23S ribosomal RNA and is necessary for the in vitro assembly process of the 50S ribosomal subunit. It is not involved in the protein synthesizing functions of that subunit. The protein is Large ribosomal subunit protein bL20 of Lachnoclostridium phytofermentans (strain ATCC 700394 / DSM 18823 / ISDg) (Clostridium phytofermentans).